We begin with the raw amino-acid sequence, 479 residues long: Type I inositol polyphosphate 5-phosphatase 8 (479 aa).

Catalytic regions lie at residues 300–315 (DKVI…LRAS) and 379–394 (KRRT…WKGD).

It belongs to the inositol polyphosphate 5-phosphatase family.

In Arabidopsis thaliana (Mouse-ear cress), this protein is Type I inositol polyphosphate 5-phosphatase 8.